Reading from the N-terminus, the 288-residue chain is Diaminopimelate epimerase (288 aa).

Residues Asn-14 and Asn-67 each coordinate substrate. Cys-76 acts as the Proton donor in catalysis. Substrate contacts are provided by residues Gly-77 to Asn-78, Asn-166, Asn-199, and Glu-217 to Arg-218. The Proton acceptor role is filled by Cys-226. Position 227–228 (Gly-227–Thr-228) interacts with substrate.

Belongs to the diaminopimelate epimerase family. In terms of assembly, homodimer.

The protein resides in the cytoplasm. The catalysed reaction is (2S,6S)-2,6-diaminopimelate = meso-2,6-diaminopimelate. It participates in amino-acid biosynthesis; L-lysine biosynthesis via DAP pathway; DL-2,6-diaminopimelate from LL-2,6-diaminopimelate: step 1/1. Its function is as follows. Catalyzes the stereoinversion of LL-2,6-diaminopimelate (L,L-DAP) to meso-diaminopimelate (meso-DAP), a precursor of L-lysine and an essential component of the bacterial peptidoglycan. The polypeptide is Diaminopimelate epimerase (Bacillus cereus (strain ATCC 10987 / NRS 248)).